The following is a 1582-amino-acid chain: Hybrid PKS-NRPS synthetase TAS1 (1582 aa).

Residues 33 to 387 are condensation (C) domain; the sequence is IPLSKVQEVL…GEDTAAASRV (355 aa). Positions 499-892 are adenylation (A) domain; it reads RSRAATQPDE…KLHILGRMNN (394 aa). The region spanning 1015-1092 is the Carrier domain; it reads NLVDRLEASI…RQAQRLSELV (78 aa). One can recognise a Ketosynthase family 3 (KS3) domain in the interval 1127 to 1574; it reads APLFAIVGMA…GVNAHCILAS (448 aa). Active-site for beta-ketoacyl synthase activity residues include Cys-1294 and His-1432. The tract at residues 1460 to 1485 is disordered; sequence ESRCSSGAISPTGTEQQPSDTKQTPR. Residues 1462–1485 are compositionally biased toward polar residues; the sequence is RCSSGAISPTGTEQQPSDTKQTPR. The active-site For beta-ketoacyl synthase activity is Asn-1498.

This sequence in the N-terminal section; belongs to the NRP synthetase family. Pantetheine 4'-phosphate is required as a cofactor.

It carries out the reaction acetoacetyl-CoA + L-isoleucine + ATP = tenuazonic acid + AMP + diphosphate + CoA + 2 H(+). In terms of biological role, hybrid PKS-NRPS synthetase that mediates the biosynthesis of the toxin tenuazonic acid (TeA), an inhibitor of protein biosynthesis on ribosomes by suppressing the release of new protein. TAS1 alone is sufficient for TeA synthesis via the condensation of isoleucine (Ile) with acetoacetyl-CoA by the N-terminal NRPS module and subsequent cyclization conducted by the C-terminal KS domain. The polypeptide is Hybrid PKS-NRPS synthetase TAS1 (Cordyceps militaris (strain CM01) (Caterpillar fungus)).